The primary structure comprises 242 residues: Small ribosomal subunit protein eS1 (242 aa).

The protein belongs to the eukaryotic ribosomal protein eS1 family. As to quaternary structure, component of the small ribosomal subunit. Mature ribosomes consist of a small (40S) and a large (60S) subunit. The 40S subunit contains about 33 different proteins and 1 molecule of RNA (18S). The 60S subunit contains about 49 different proteins and 3 molecules of RNA (25S, 5.8S and 5S).

It localises to the cytoplasm. The chain is Small ribosomal subunit protein eS1 from Lodderomyces elongisporus (strain ATCC 11503 / CBS 2605 / JCM 1781 / NBRC 1676 / NRRL YB-4239) (Yeast).